We begin with the raw amino-acid sequence, 129 residues long: Glycine cleavage system H protein (129 aa).

In terms of domain architecture, Lipoyl-binding spans 24–106; sequence LVRVGISAFA…HGEGWLLVVR (83 aa). Lys65 is subject to N6-lipoyllysine.

The protein belongs to the GcvH family. In terms of assembly, the glycine cleavage system is composed of four proteins: P, T, L and H. It depends on (R)-lipoate as a cofactor.

The glycine cleavage system catalyzes the degradation of glycine. The H protein shuttles the methylamine group of glycine from the P protein to the T protein. This Prochlorococcus marinus (strain MIT 9303) protein is Glycine cleavage system H protein.